The following is a 288-amino-acid chain: Thymidylate synthase (288 aa).

R21 lines the dUMP pocket. N51 lines the (6R)-5,10-methylene-5,6,7,8-tetrahydrofolate pocket. Residue 150 to 151 (RR) participates in dUMP binding. The active-site Nucleophile is C170. Residues 190-193 (RSGD), N201, and 231-233 (HIY) contribute to the dUMP site. D193 is a (6R)-5,10-methylene-5,6,7,8-tetrahydrofolate binding site. A287 contacts (6R)-5,10-methylene-5,6,7,8-tetrahydrofolate.

Belongs to the thymidylate synthase family. Bacterial-type ThyA subfamily. As to quaternary structure, homodimer.

The protein resides in the cytoplasm. It catalyses the reaction dUMP + (6R)-5,10-methylene-5,6,7,8-tetrahydrofolate = 7,8-dihydrofolate + dTMP. The protein operates within pyrimidine metabolism; dTTP biosynthesis. Functionally, catalyzes the reductive methylation of 2'-deoxyuridine-5'-monophosphate (dUMP) to 2'-deoxythymidine-5'-monophosphate (dTMP) while utilizing 5,10-methylenetetrahydrofolate (mTHF) as the methyl donor and reductant in the reaction, yielding dihydrofolate (DHF) as a by-product. This enzymatic reaction provides an intracellular de novo source of dTMP, an essential precursor for DNA biosynthesis. The polypeptide is Thymidylate synthase (Aster yellows witches'-broom phytoplasma (strain AYWB)).